A 225-amino-acid polypeptide reads, in one-letter code: Potassium-transporting ATPase KdpC subunit (225 aa).

Residues 18–38 (ALLVLTVVTGIVYPLVVTGVA) form a helical membrane-spanning segment. The disordered stretch occupies residues 134–161 (NSVPGHPVRPEDVPADAVTSSGSGLDPD).

It belongs to the KdpC family. The system is composed of three essential subunits: KdpA, KdpB and KdpC.

The protein localises to the cell membrane. Functionally, part of the high-affinity ATP-driven potassium transport (or Kdp) system, which catalyzes the hydrolysis of ATP coupled with the electrogenic transport of potassium into the cytoplasm. This subunit acts as a catalytic chaperone that increases the ATP-binding affinity of the ATP-hydrolyzing subunit KdpB by the formation of a transient KdpB/KdpC/ATP ternary complex. The polypeptide is Potassium-transporting ATPase KdpC subunit (Streptomyces coelicolor (strain ATCC BAA-471 / A3(2) / M145)).